We begin with the raw amino-acid sequence, 317 residues long: Beta-ketoacyl-[acyl-carrier-protein] synthase III (317 aa).

Catalysis depends on residues Cys-112 and His-244. An ACP-binding region spans residues 245-249 (QANLR). Asn-274 is a catalytic residue.

This sequence belongs to the thiolase-like superfamily. FabH family. As to quaternary structure, homodimer.

It is found in the cytoplasm. The catalysed reaction is malonyl-[ACP] + acetyl-CoA + H(+) = 3-oxobutanoyl-[ACP] + CO2 + CoA. It functions in the pathway lipid metabolism; fatty acid biosynthesis. Catalyzes the condensation reaction of fatty acid synthesis by the addition to an acyl acceptor of two carbons from malonyl-ACP. Catalyzes the first condensation reaction which initiates fatty acid synthesis and may therefore play a role in governing the total rate of fatty acid production. Possesses both acetoacetyl-ACP synthase and acetyl transacylase activities. Its substrate specificity determines the biosynthesis of branched-chain and/or straight-chain of fatty acids. In Salmonella arizonae (strain ATCC BAA-731 / CDC346-86 / RSK2980), this protein is Beta-ketoacyl-[acyl-carrier-protein] synthase III.